A 275-amino-acid chain; its full sequence is NAD kinase (275 aa).

D53 serves as the catalytic Proton acceptor. Residues 53–54, 129–130, R155, D157, and 168–173 contribute to the NAD(+) site; these read DG, NE, and TAYNKS.

The protein belongs to the NAD kinase family. It depends on a divalent metal cation as a cofactor.

It localises to the cytoplasm. The catalysed reaction is NAD(+) + ATP = ADP + NADP(+) + H(+). In terms of biological role, involved in the regulation of the intracellular balance of NAD and NADP, and is a key enzyme in the biosynthesis of NADP. Catalyzes specifically the phosphorylation on 2'-hydroxyl of the adenosine moiety of NAD to yield NADP. This chain is NAD kinase, found in Streptococcus agalactiae serotype Ia (strain ATCC 27591 / A909 / CDC SS700).